The following is a 359-amino-acid chain: Cytochrome c oxidase subunit 2 (359 aa).

The N-terminal stretch at 1–28 (MEQQNKRGLKRKALLGGVLGSGGLAMAG) is a signal peptide. Cys29 carries the N-palmitoyl cysteine lipid modification. Cys29 carries the S-diacylglycerol cysteine lipid modification. The next 2 membrane-spanning stretches (helical) occupy residues 64 to 84 (VWVA…TAIF) and 107 to 127 (VPLE…LFFF). Cu cation is bound by residues His244, Cys285, Glu287, Cys289, His293, and Met296. Residues 338–359 (STAPFVSDRTGTRDGENFQTPA) are disordered.

It belongs to the cytochrome c oxidase subunit 2 family. In terms of assembly, associates with subunits I, III and IV to form cytochrome c oxidase. Binuclear copper center (CuA) is required as a cofactor.

The protein resides in the cell membrane. It catalyses the reaction 4 Fe(II)-[cytochrome c] + O2 + 8 H(+)(in) = 4 Fe(III)-[cytochrome c] + 2 H2O + 4 H(+)(out). Functionally, subunits I and II form the functional core of the enzyme complex. Electrons originating in cytochrome c are transferred via heme a and Cu(A) to the binuclear center formed by heme a3 and Cu(B). In Corynebacterium efficiens (strain DSM 44549 / YS-314 / AJ 12310 / JCM 11189 / NBRC 100395), this protein is Cytochrome c oxidase subunit 2 (ctaC).